The chain runs to 94 residues: Integration host factor subunit beta (94 aa).

The protein belongs to the bacterial histone-like protein family. As to quaternary structure, heterodimer of an alpha and a beta chain.

In terms of biological role, this protein is one of the two subunits of integration host factor, a specific DNA-binding protein that functions in genetic recombination as well as in transcriptional and translational control. The sequence is that of Integration host factor subunit beta from Escherichia coli (strain UTI89 / UPEC).